Reading from the N-terminus, the 872-residue chain is Bifunctional uridylyltransferase/uridylyl-removing enzyme (872 aa).

The uridylyltransferase stretch occupies residues 1–332 (MALPNKVKKL…PKHHQPIIQE (332 aa)). Residues 333-691 (LDRNFERIGN…VSNKAMHGGT (359 aa)) form a uridylyl-removing region. The HD domain occupies 450–572 (VDEHTHRLIN…VKTERQLDYL (123 aa)). ACT domains follow at residues 692–773 (QVFV…FKKN) and 799–872 (LIEI…AETE).

The protein belongs to the GlnD family. Mg(2+) serves as cofactor.

The catalysed reaction is [protein-PII]-L-tyrosine + UTP = [protein-PII]-uridylyl-L-tyrosine + diphosphate. The enzyme catalyses [protein-PII]-uridylyl-L-tyrosine + H2O = [protein-PII]-L-tyrosine + UMP + H(+). Its activity is regulated as follows. Uridylyltransferase (UTase) activity is inhibited by glutamine, while glutamine activates uridylyl-removing (UR) activity. Functionally, modifies, by uridylylation and deuridylylation, the PII regulatory proteins (GlnB and homologs), in response to the nitrogen status of the cell that GlnD senses through the glutamine level. Under low glutamine levels, catalyzes the conversion of the PII proteins and UTP to PII-UMP and PPi, while under higher glutamine levels, GlnD hydrolyzes PII-UMP to PII and UMP (deuridylylation). Thus, controls uridylylation state and activity of the PII proteins, and plays an important role in the regulation of nitrogen assimilation and metabolism. In Pseudoalteromonas translucida (strain TAC 125), this protein is Bifunctional uridylyltransferase/uridylyl-removing enzyme.